The chain runs to 348 residues: DnaJ homolog subfamily B member 5 (348 aa).

The J domain maps to aspartate 4–glycine 68.

This chain is DnaJ homolog subfamily B member 5 (DNAJB5), found in Bos taurus (Bovine).